Reading from the N-terminus, the 352-residue chain is SNF1-related protein kinase regulatory subunit gamma-like PV42a (352 aa).

CBS domains follow at residues 24-106 (RNRR…LSDL), 122-196 (LEGL…FDDL), 210-281 (VNDS…ELQT), and 297-352 (KERE…STLS).

Belongs to the 5'-AMP-activated protein kinase gamma subunit family. As to expression, expressed highly in rosette leaves, cauline leaves, open flowers, developing siliques and dry seeds, but at a low level in stems and floral buds.

In terms of biological role, plays redundant role with PV42b in regulating male gametogenesis and pollen tube guidance. The protein is SNF1-related protein kinase regulatory subunit gamma-like PV42a (PV42A) of Arabidopsis thaliana (Mouse-ear cress).